The chain runs to 296 residues: Tubulin polyglutamylase complex subunit 2 (296 aa).

Over residues 254–265 the composition is skewed to basic residues; sequence SKNKILIPKKKG. A disordered region spans residues 254 to 296; sequence SKNKILIPKKKGPVPPASGQKGPGPLPPPTSKPTTGSGNPVRK. A compositionally biased stretch (low complexity) spans 285-296; the sequence is KPTTGSGNPVRK.

In terms of assembly, part of the neuronal tubulin polyglutamylase complex which contains TPGS1, TPGS2, TTLL1, LRRC49 and NICN1. Interacts with CSTPP1 and LRRC49.

It is found in the cytoplasm. The protein localises to the cytoskeleton. The protein resides in the microtubule organizing center. It localises to the centrosome. Its subcellular location is the centriolar satellite. In terms of biological role, subunit of the tubulin polyglutamylase complex (TPGC). The complex mediates cilia and flagella polyglutamylation which is essential for their biogenesis and motility. This Mus musculus (Mouse) protein is Tubulin polyglutamylase complex subunit 2 (Tpgs2).